An 801-amino-acid chain; its full sequence is Palmitoyl thioesterase CPT1C (801 aa).

Residues 1-49 (MAEAHQASSLLSSLSSDGAEVELSSSVWQEIYLSALRSWKRNLWRVWND) lie on the Cytoplasmic side of the membrane. Residues 50–70 (FLAGVVPATPLSWLFLFSTIQ) form a helical membrane-spanning segment. The Mitochondrial intermembrane portion of the chain corresponds to 71–103 (LACLLQLDPSLGLMEKIKELLPDWGGQHHQLQG). The helical transmembrane segment at 104–124 (LLAAAVFASCLWGTLIFTLHV) threads the bilayer. Over 125–801 (ALRLLLSHHG…PNIPKSSTNL (677 aa)) the chain is Cytoplasmic. Residue H469 is the Proton acceptor of the active site. 551 to 563 (GKSFIKGCHVSSD) is a CoA binding site. Residues Y585, S587, and T598 each coordinate (R)-carnitine. Residues 760-801 (LFQAGQQFKRQFTGLGESSGWKYSNLSCKTVDPNIPKSSTNL) form a required for interaction with GRIA1 region.

The protein belongs to the carnitine/choline acetyltransferase family. In terms of assembly, peripherally associated with AMPAR complex. AMPAR complex consists of an inner core made of 4 pore-forming GluA/GRIA proteins (GRIA1, GRIA2, GRIA3 and GRIA4) and 4 major auxiliary subunits arranged in a twofold symmetry. One of the two pairs of distinct binding sites is occupied either by CNIH2, CNIH3 or CACNG2, CACNG3. The other harbors CACNG2, CACNG3, CACNG4, CACNG8 or GSG1L. This inner core of AMPAR complex is complemented by outer core constituents binding directly to the GluA/GRIA proteins at sites distinct from the interaction sites of the inner core constituents. Outer core constituents include at least PRRT1, PRRT2, CKAMP44/SHISA9, FRRS1L and NRN1. The proteins of the inner and outer core serve as a platform for other, more peripherally associated AMPAR constituents, including CPT1C. Alone or in combination, these auxiliary subunits control the gating and pharmacology of the AMPAR complex and profoundly impact their biogenesis and protein processing. Interacts with SACM1L; the interaction regulates SACM1L phosphatidylinositol-3-phosphatase activity and translocation to endoplasmic reticulum/trans Golgi network in a malonyl-CoA dependent manner. Interacts with ATL1. In terms of tissue distribution, expressed in brain (at protein level).

It localises to the synapse. The protein resides in the cell projection. It is found in the dendrite. The protein localises to the axon. Its subcellular location is the endoplasmic reticulum membrane. It carries out the reaction S-hexadecanoyl-L-cysteinyl-[protein] + H2O = L-cysteinyl-[protein] + hexadecanoate + H(+). Its function is as follows. Palmitoyl thioesterase specifically expressed in the endoplasmic reticulum of neurons. Modulates the trafficking of the glutamate receptor, AMPAR, to plasma membrane through depalmitoylation of GRIA1. Also regulates AMPR trafficking through the regulation of SACM1L phosphatidylinositol-3-phosphatase activity by interaction in a malonyl-CoA dependent manner. Binds malonyl-CoA and couples malonyl-CoA to ceramide levels, necessary for proper spine maturation and contributing to systemic energy homeostasis and appetite control. Binds to palmitoyl-CoA, but does not have carnitine palmitoyltransferase 1 catalytic activity or at very low levels. The protein is Palmitoyl thioesterase CPT1C (Cpt1c) of Rattus norvegicus (Rat).